The chain runs to 334 residues: Protein-methionine-sulfoxide reductase catalytic subunit MsrP (334 aa).

Positions 1–44 form a signal peptide, tat-type signal; the sequence is MKKKQFLKESDVTAESVFFMKRRQVLKALGISAAALSLPHAAHA. Residues asparagine 88, 91–92, cysteine 146, threonine 181, asparagine 233, arginine 238, and 249–251 contribute to the Mo-molybdopterin site; these read YE and GIK.

This sequence belongs to the MsrP family. Heterodimer of a catalytic subunit (MsrP) and a heme-binding subunit (MsrQ). Requires Mo-molybdopterin as cofactor. Post-translationally, predicted to be exported by the Tat system. The position of the signal peptide cleavage has not been experimentally proven.

It is found in the periplasm. The enzyme catalyses L-methionyl-[protein] + a quinone + H2O = L-methionyl-(S)-S-oxide-[protein] + a quinol. The catalysed reaction is L-methionyl-[protein] + a quinone + H2O = L-methionyl-(R)-S-oxide-[protein] + a quinol. In terms of biological role, part of the MsrPQ system that repairs oxidized periplasmic proteins containing methionine sulfoxide residues (Met-O), using respiratory chain electrons. Thus protects these proteins from oxidative-stress damage caused by reactive species of oxygen and chlorine generated by the host defense mechanisms. MsrPQ is essential for the maintenance of envelope integrity under bleach stress, rescuing a wide series of structurally unrelated periplasmic proteins from methionine oxidation, including the primary periplasmic chaperone SurA and the lipoprotein Pal. The catalytic subunit MsrP is non-stereospecific, being able to reduce both (R-) and (S-) diastereoisomers of methionine sulfoxide. The protein is Protein-methionine-sulfoxide reductase catalytic subunit MsrP of Escherichia coli O139:H28 (strain E24377A / ETEC).